Here is a 557-residue protein sequence, read N- to C-terminus: Probable protein kinase UbiB (557 aa).

The Protein kinase domain maps to Ala-121–Ala-509. ATP-binding positions include Leu-127 to Val-135 and Lys-154. The active-site Proton acceptor is Asp-289. 2 helical membrane passes run Val-506–His-526 and Val-535–Leu-555.

Belongs to the ABC1 family. UbiB subfamily.

Its subcellular location is the cell inner membrane. The protein operates within cofactor biosynthesis; ubiquinone biosynthesis [regulation]. Functionally, is probably a protein kinase regulator of UbiI activity which is involved in aerobic coenzyme Q (ubiquinone) biosynthesis. This Xanthomonas campestris pv. campestris (strain 8004) protein is Probable protein kinase UbiB.